Here is a 272-residue protein sequence, read N- to C-terminus: 2-dehydro-3-deoxyphosphooctonate aldolase (272 aa).

Belongs to the KdsA family.

The protein resides in the cytoplasm. It carries out the reaction D-arabinose 5-phosphate + phosphoenolpyruvate + H2O = 3-deoxy-alpha-D-manno-2-octulosonate-8-phosphate + phosphate. Its pathway is carbohydrate biosynthesis; 3-deoxy-D-manno-octulosonate biosynthesis; 3-deoxy-D-manno-octulosonate from D-ribulose 5-phosphate: step 2/3. The protein operates within bacterial outer membrane biogenesis; lipopolysaccharide biosynthesis. The chain is 2-dehydro-3-deoxyphosphooctonate aldolase from Geotalea uraniireducens (strain Rf4) (Geobacter uraniireducens).